The primary structure comprises 595 residues: L-fucose isomerase (595 aa).

Catalysis depends on proton acceptor residues glutamate 341 and aspartate 365. Residues glutamate 341, aspartate 365, and histidine 531 each contribute to the Mn(2+) site.

Belongs to the L-fucose isomerase family. Mn(2+) is required as a cofactor.

The protein localises to the cytoplasm. It catalyses the reaction L-fucose = L-fuculose. It functions in the pathway carbohydrate degradation; L-fucose degradation; L-lactaldehyde and glycerone phosphate from L-fucose: step 1/3. Its function is as follows. Converts the aldose L-fucose into the corresponding ketose L-fuculose. This Clostridium perfringens (strain 13 / Type A) protein is L-fucose isomerase.